Here is a 257-residue protein sequence, read N- to C-terminus: Acetylglutamate kinase (257 aa).

Substrate contacts are provided by residues glycine 43–glycine 44, arginine 65, and asparagine 157.

Belongs to the acetylglutamate kinase family. ArgB subfamily.

It is found in the cytoplasm. The catalysed reaction is N-acetyl-L-glutamate + ATP = N-acetyl-L-glutamyl 5-phosphate + ADP. It participates in amino-acid biosynthesis; L-arginine biosynthesis; N(2)-acetyl-L-ornithine from L-glutamate: step 2/4. In terms of biological role, catalyzes the ATP-dependent phosphorylation of N-acetyl-L-glutamate. This Pasteurella multocida (strain Pm70) protein is Acetylglutamate kinase.